The primary structure comprises 91 residues: Mercuric transport protein periplasmic component (91 aa).

Positions 1-19 (MKKLFASLAIAAVVAPVWA) are cleaved as a signal peptide. One can recognise an HMA domain in the interval 22 to 88 (QTVTLSVPGM…ATEDAGYPSS (67 aa)). 2 residues coordinate Hg(2+): cysteine 33 and cysteine 36.

Belongs to the MerP family. Monomer.

Its subcellular location is the periplasm. Functionally, involved in mercury resistance. Acts as a mercury scavenger that specifically binds to a mercuric ion in the periplasm and probably passes it to the cytoplasmic mercuric reductase MerA via the mercuric transport protein MerT. The polypeptide is Mercuric transport protein periplasmic component (Serratia marcescens).